A 291-amino-acid polypeptide reads, in one-letter code: MRKYNDKHIPVLPNEVVEYLLWKDNGIYVDCTAGEGGHTFLIAKKCPNSRVIAIDVDLEVLEIAQKNLKAFHNVILLKASYVDLPVVLKSLGIERVSGILADLGISTYQLKAEGRGFSFNRDEPLDMRMDIQQDTSAHKITNFYSEEKLSKIIFKYGEERFARRIAKQIVKNRPINTTKELVEIIKKALPPSEIRKRKRHFATKTFQAIRIEVNKELKNIEQLLKNAEELLEIGGRLAIISFHSLEDRIVKHFIKNSNNLKHIAGPIKPTQEETKNNPRARSAKLRVAERI.

S-adenosyl-L-methionine is bound by residues 36–38 (GGH), Asp-55, Leu-88, Asp-102, and Gln-109. Residues 268-291 (KPTQEETKNNPRARSAKLRVAERI) form a disordered region.

Belongs to the methyltransferase superfamily. RsmH family.

It is found in the cytoplasm. It carries out the reaction cytidine(1402) in 16S rRNA + S-adenosyl-L-methionine = N(4)-methylcytidine(1402) in 16S rRNA + S-adenosyl-L-homocysteine + H(+). In terms of biological role, specifically methylates the N4 position of cytidine in position 1402 (C1402) of 16S rRNA. This chain is Ribosomal RNA small subunit methyltransferase H, found in Thermosipho melanesiensis (strain DSM 12029 / CIP 104789 / BI429).